A 485-amino-acid chain; its full sequence is Catalase isozyme 1 (485 aa).

Residues His-58 and Asn-131 contribute to the active site. Residue Tyr-341 coordinates heme.

This sequence belongs to the catalase family. In terms of assembly, homotetramer. Heme serves as cofactor.

It is found in the peroxisome. It carries out the reaction 2 H2O2 = O2 + 2 H2O. Occurs in almost all aerobically respiring organisms and serves to protect cells from the toxic effects of hydrogen peroxide. This is Catalase isozyme 1 (CAT1) from Nicotiana plumbaginifolia (Leadwort-leaved tobacco).